A 343-amino-acid chain; its full sequence is Holliday junction branch migration complex subunit RuvB (343 aa).

A large ATPase domain (RuvB-L) region spans residues 4-193; sequence TDNLTAAQPQ…FGIVSRLEFY (190 aa). ATP-binding positions include leucine 32, arginine 33, glycine 74, lysine 77, threonine 78, threonine 79, 140-142, arginine 183, tyrosine 193, and arginine 230; that span reads EDY. Threonine 78 lines the Mg(2+) pocket. The tract at residues 194-264 is small ATPAse domain (RuvB-S); that stretch reads ENRDLATIVS…IADAALSMLD (71 aa). Positions 267–343 are head domain (RuvB-H); that stretch reads VQGLDVMDRK…YLHFGLPVEK (77 aa). DNA contacts are provided by arginine 322 and arginine 327.

This sequence belongs to the RuvB family. In terms of assembly, homohexamer. Forms an RuvA(8)-RuvB(12)-Holliday junction (HJ) complex. HJ DNA is sandwiched between 2 RuvA tetramers; dsDNA enters through RuvA and exits via RuvB. An RuvB hexamer assembles on each DNA strand where it exits the tetramer. Each RuvB hexamer is contacted by two RuvA subunits (via domain III) on 2 adjacent RuvB subunits; this complex drives branch migration. In the full resolvosome a probable DNA-RuvA(4)-RuvB(12)-RuvC(2) complex forms which resolves the HJ.

It localises to the cytoplasm. The enzyme catalyses ATP + H2O = ADP + phosphate + H(+). Its function is as follows. The RuvA-RuvB-RuvC complex processes Holliday junction (HJ) DNA during genetic recombination and DNA repair, while the RuvA-RuvB complex plays an important role in the rescue of blocked DNA replication forks via replication fork reversal (RFR). RuvA specifically binds to HJ cruciform DNA, conferring on it an open structure. The RuvB hexamer acts as an ATP-dependent pump, pulling dsDNA into and through the RuvAB complex. RuvB forms 2 homohexamers on either side of HJ DNA bound by 1 or 2 RuvA tetramers; 4 subunits per hexamer contact DNA at a time. Coordinated motions by a converter formed by DNA-disengaged RuvB subunits stimulates ATP hydrolysis and nucleotide exchange. Immobilization of the converter enables RuvB to convert the ATP-contained energy into a lever motion, pulling 2 nucleotides of DNA out of the RuvA tetramer per ATP hydrolyzed, thus driving DNA branch migration. The RuvB motors rotate together with the DNA substrate, which together with the progressing nucleotide cycle form the mechanistic basis for DNA recombination by continuous HJ branch migration. Branch migration allows RuvC to scan DNA until it finds its consensus sequence, where it cleaves and resolves cruciform DNA. The polypeptide is Holliday junction branch migration complex subunit RuvB (Neisseria meningitidis serogroup A / serotype 4A (strain DSM 15465 / Z2491)).